Reading from the N-terminus, the 498-residue chain is Ribulose bisphosphate carboxylase large chain (498 aa).

Residues 1–2 (MS) constitute a propeptide that is removed on maturation. Pro-3 is subject to N-acetylproline. Position 14 is an N6,N6,N6-trimethyllysine (Lys-14). Substrate-binding residues include Asn-123 and Thr-173. Residue Lys-175 is the Proton acceptor of the active site. Lys-177 serves as a coordination point for substrate. Mg(2+)-binding residues include Lys-201, Asp-203, and Glu-204. Lys-201 bears the N6-carboxylysine mark. Catalysis depends on His-294, which acts as the Proton acceptor. Substrate-binding residues include Arg-295, His-327, and Ser-379. The disordered stretch occupies residues 473-498 (DTLDPNDKKQRDNEDTLADKFFGDKG).

Belongs to the RuBisCO large chain family. Type I subfamily. As to quaternary structure, heterohexadecamer of 8 large chains and 8 small chains; disulfide-linked. The disulfide link is formed within the large subunit homodimers. Mg(2+) is required as a cofactor. Post-translationally, the disulfide bond which can form in the large chain dimeric partners within the hexadecamer appears to be associated with oxidative stress and protein turnover.

It localises to the plastid. It carries out the reaction 2 (2R)-3-phosphoglycerate + 2 H(+) = D-ribulose 1,5-bisphosphate + CO2 + H2O. It catalyses the reaction D-ribulose 1,5-bisphosphate + O2 = 2-phosphoglycolate + (2R)-3-phosphoglycerate + 2 H(+). Its function is as follows. RuBisCO catalyzes two reactions: the carboxylation of D-ribulose 1,5-bisphosphate, the primary event in carbon dioxide fixation, as well as the oxidative fragmentation of the pentose substrate in the photorespiration process. Both reactions occur simultaneously and in competition at the same active site. The sequence is that of Ribulose bisphosphate carboxylase large chain from Cuscuta exaltata (Tall dodder).